The following is a 441-amino-acid chain: Glutamyl-tRNA reductase (441 aa).

Residues 47–50 (TCNR), S110, 115–117 (ERE), and Q121 each bind substrate. C48 functions as the Nucleophile in the catalytic mechanism. 192-197 (GTGAYA) contacts NADP(+).

The protein belongs to the glutamyl-tRNA reductase family. Homodimer.

The catalysed reaction is (S)-4-amino-5-oxopentanoate + tRNA(Glu) + NADP(+) = L-glutamyl-tRNA(Glu) + NADPH + H(+). Its pathway is porphyrin-containing compound metabolism; protoporphyrin-IX biosynthesis; 5-aminolevulinate from L-glutamyl-tRNA(Glu): step 1/2. Its function is as follows. Catalyzes the NADPH-dependent reduction of glutamyl-tRNA(Glu) to glutamate 1-semialdehyde (GSA). The sequence is that of Glutamyl-tRNA reductase from Pseudarthrobacter chlorophenolicus (strain ATCC 700700 / DSM 12829 / CIP 107037 / JCM 12360 / KCTC 9906 / NCIMB 13794 / A6) (Arthrobacter chlorophenolicus).